Consider the following 563-residue polypeptide: Delta-1-pyrroline-5-carboxylate dehydrogenase, mitochondrial (563 aa).

Residues Met-1–Trp-24 constitute a mitochondrion transit peptide. Lys-31 carries the post-translational modification N6-succinyllysine. Position 44 is a phosphoserine (Ser-44). An N6-acetyllysine modification is found at Lys-52. An N6-acetyllysine; alternate mark is found at Lys-93, Lys-99, Lys-114, Lys-130, and Lys-175. N6-succinyllysine; alternate is present on residues Lys-93, Lys-99, Lys-114, Lys-130, and Lys-175. NAD(+) contacts are provided by residues Ser-208, Lys-233, and Gly-286–Thr-290. Residue Glu-314 is the Proton acceptor of the active site. N6-acetyllysine is present on Lys-318. The residue at position 347 (Lys-347) is an N6-succinyllysine. Catalysis depends on Cys-348, which acts as the Nucleophile. N6-acetyllysine is present on residues Lys-365 and Lys-376. Lys-395 bears the N6-succinyllysine mark. NAD(+) is bound at residue Glu-447. Lys-462 carries the N6-acetyllysine modification. Lys-509 carries the N6-acetyllysine; alternate modification. Position 509 is an N6-succinyllysine; alternate (Lys-509). Ser-513 is a binding site for substrate. Lys-531 and Lys-552 each carry N6-acetyllysine.

The protein belongs to the aldehyde dehydrogenase family. As to quaternary structure, homodimer. In terms of tissue distribution, highest expression is found in liver followed by skeletal muscle, kidney, heart, brain, placenta, lung and pancreas.

The protein resides in the mitochondrion matrix. The enzyme catalyses L-glutamate 5-semialdehyde + NAD(+) + H2O = L-glutamate + NADH + 2 H(+). It functions in the pathway amino-acid degradation; L-proline degradation into L-glutamate; L-glutamate from L-proline: step 2/2. Functionally, irreversible conversion of delta-1-pyrroline-5-carboxylate (P5C), derived either from proline or ornithine, to glutamate. This is a necessary step in the pathway interconnecting the urea and tricarboxylic acid cycles. The preferred substrate is glutamic gamma-semialdehyde, other substrates include succinic, glutaric and adipic semialdehydes. In Homo sapiens (Human), this protein is Delta-1-pyrroline-5-carboxylate dehydrogenase, mitochondrial (ALDH4A1).